The primary structure comprises 49 residues: Large ribosomal subunit protein bL33A (49 aa).

It belongs to the bacterial ribosomal protein bL33 family.

The polypeptide is Large ribosomal subunit protein bL33A (Levilactobacillus brevis (strain ATCC 367 / BCRC 12310 / CIP 105137 / JCM 1170 / LMG 11437 / NCIMB 947 / NCTC 947) (Lactobacillus brevis)).